Reading from the N-terminus, the 179-residue chain is ATP synthase subunit delta 1 (179 aa).

This sequence belongs to the ATPase delta chain family. In terms of assembly, F-type ATPases have 2 components, F(1) - the catalytic core - and F(0) - the membrane proton channel. F(1) has five subunits: alpha(3), beta(3), gamma(1), delta(1), epsilon(1). F(0) has three main subunits: a(1), b(2) and c(10-14). The alpha and beta chains form an alternating ring which encloses part of the gamma chain. F(1) is attached to F(0) by a central stalk formed by the gamma and epsilon chains, while a peripheral stalk is formed by the delta and b chains.

The protein localises to the cell inner membrane. Functionally, f(1)F(0) ATP synthase produces ATP from ADP in the presence of a proton or sodium gradient. F-type ATPases consist of two structural domains, F(1) containing the extramembraneous catalytic core and F(0) containing the membrane proton channel, linked together by a central stalk and a peripheral stalk. During catalysis, ATP synthesis in the catalytic domain of F(1) is coupled via a rotary mechanism of the central stalk subunits to proton translocation. In terms of biological role, this protein is part of the stalk that links CF(0) to CF(1). It either transmits conformational changes from CF(0) to CF(1) or is implicated in proton conduction. This chain is ATP synthase subunit delta 1, found in Syntrophotalea carbinolica (strain DSM 2380 / NBRC 103641 / GraBd1) (Pelobacter carbinolicus).